The sequence spans 447 residues: MAQTGVLLTKEPAPQSIDVCELPRKEYEVACNTGAYTSSGLATAGFRTAKYLRDEWFQNSYARYHQAFADRDYSERQRHESGQLVAETGALAQRTQLDSTRKVGERLEDMHCWKSELQREIDELSSETDLMMAQKLRLQRALDATSVPYSIATDNLQCRERRQHPDLVRDYVEVELLKETELIRNIQELLKRTIGQAVDQIRLNREHKESCEMNWSDKVEVYNIDDTCSRYTNESTQVQFYPHSSKFEESASTPETWAKFNHDNLLRAERERLASVNLRKLIDCILRDTAEDLRLQCDAVNSAFSSRCQELDDSLQKLQYHLRKTLTEITDQEHQIAALKQAIKDKEAPLRVAQTRLYQRSHRPNVELCRDNAQFRLLSEVEELNMSLRALKEKLQDAEQALRNLEDSRMSLEKDIAVKTNSLFIDRQKCMTHRNRYPSVLQLAGYQ.

Coiled coils occupy residues 322–348 and 375–423; these read LRKT…DKEA and FRLL…TNSL.

It belongs to the tektin family. In terms of assembly, microtubule inner protein component of sperm flagellar doublet microtubules. Ubiquitinated, leading to its degradation. Deubiquitinated by USP16, promoting its stability. In terms of tissue distribution, detected in testis, where it is weakly expressed in round spermatids, and strongly expressed in the flagellum of step 16 elongated spermatids (at protein level). Expressed in spermatozoa. In the sperm flagellum, localizes to the principal piece and midpiece (at protein level). Specifically expressed in testis; not detected in other tissues tested.

It localises to the cytoplasm. The protein resides in the cytoskeleton. The protein localises to the cilium axoneme. It is found in the flagellum axoneme. Microtubule inner protein (MIP) part of the dynein-decorated doublet microtubules (DMTs) in cilia and flagellar axoneme. Forms filamentous polymers in the walls of ciliary and flagellar microtubules. Contributes to normal sperm motility. This is Tektin-4 (Tekt4) from Mus musculus (Mouse).